The following is a 785-amino-acid chain: Phenylalanine--tRNA ligase beta subunit (785 aa).

Residues 38–150 (CEHLKTFVIA…NTYNVGDTFF (113 aa)) enclose the tRNA-binding domain. A B5 domain is found at 394–470 (VDNIELNFFP…RLYGYDKICE (77 aa)). 4 residues coordinate Mg(2+): D448, D454, E457, and E458. Residues 690-783 (SCYQSVKRDF…VAEKLGGVLR (94 aa)) enclose the FDX-ACB domain.

This sequence belongs to the phenylalanyl-tRNA synthetase beta subunit family. Type 1 subfamily. Tetramer of two alpha and two beta subunits. Mg(2+) serves as cofactor.

It is found in the cytoplasm. It catalyses the reaction tRNA(Phe) + L-phenylalanine + ATP = L-phenylalanyl-tRNA(Phe) + AMP + diphosphate + H(+). The sequence is that of Phenylalanine--tRNA ligase beta subunit from Ehrlichia canis (strain Jake).